A 416-amino-acid polypeptide reads, in one-letter code: Ribulose bisphosphate carboxylase large chain (416 aa).

Residues Asn-102 and Thr-152 each contribute to the substrate site. Catalysis depends on Lys-154, which acts as the Proton acceptor. Lys-156 is a binding site for substrate. Mg(2+) is bound by residues Lys-180, Asp-182, and Glu-183. Lys-180 is modified (N6-carboxylysine). Catalysis depends on His-273, which acts as the Proton acceptor. Residues Arg-274, His-306, and Ser-358 each contribute to the substrate site.

It belongs to the RuBisCO large chain family. Type I subfamily. Heterohexadecamer of 8 large chains and 8 small chains; disulfide-linked. The disulfide link is formed within the large subunit homodimers. Requires Mg(2+) as cofactor. In terms of processing, the disulfide bond which can form in the large chain dimeric partners within the hexadecamer appears to be associated with oxidative stress and protein turnover.

It localises to the plastid. Its subcellular location is the chloroplast. The enzyme catalyses 2 (2R)-3-phosphoglycerate + 2 H(+) = D-ribulose 1,5-bisphosphate + CO2 + H2O. It carries out the reaction D-ribulose 1,5-bisphosphate + O2 = 2-phosphoglycolate + (2R)-3-phosphoglycerate + 2 H(+). RuBisCO catalyzes two reactions: the carboxylation of D-ribulose 1,5-bisphosphate, the primary event in carbon dioxide fixation, as well as the oxidative fragmentation of the pentose substrate in the photorespiration process. Both reactions occur simultaneously and in competition at the same active site. This Arthropteris beckleri (Fern) protein is Ribulose bisphosphate carboxylase large chain (rbcL).